The sequence spans 957 residues: Vacuolar membrane protease (957 aa).

Over Met-1 to Thr-10 the chain is Cytoplasmic. A helical transmembrane segment spans residues Pro-11–Val-31. The Vacuolar segment spans residues Thr-32–Thr-369. N-linked (GlcNAc...) asparagine glycosylation is found at Asn-48, Asn-105, and Asn-136. Zn(2+)-binding residues include His-152 and Asp-164. Glu-198 (proton acceptor) is an active-site residue. Zn(2+) is bound by residues Glu-199, Glu-224, and His-297. Residues Leu-370–Phe-390 traverse the membrane as a helical segment. At Gly-391–Gly-423 the chain is on the cytoplasmic side. A helical transmembrane segment spans residues Phe-424–Leu-444. The Vacuolar portion of the chain corresponds to Leu-445–Ala-450. Residues Phe-451 to Val-471 form a helical membrane-spanning segment. The Cytoplasmic segment spans residues Ala-472–Met-490. The helical transmembrane segment at Tyr-491–Val-511 threads the bilayer. Topologically, residues Asn-512–Pro-521 are vacuolar. A helical membrane pass occupies residues Ala-522–Phe-542. Residues Ala-543 to Lys-642 are Cytoplasmic-facing. Disordered stretches follow at residues Arg-560–Glu-591 and Phe-603–Asp-628. Positions Glu-564–Ala-577 are enriched in polar residues. A helical membrane pass occupies residues Leu-643–Val-663. The Vacuolar portion of the chain corresponds to Gly-664–Leu-685. The helical transmembrane segment at Phe-686 to Ile-706 threads the bilayer. Residues His-707–Val-713 lie on the Cytoplasmic side of the membrane. The chain crosses the membrane as a helical span at residues Pro-714–Phe-734. Residues Ser-735 to Ile-957 lie on the Vacuolar side of the membrane. Asn-782, Asn-818, and Asn-834 each carry an N-linked (GlcNAc...) asparagine glycan.

Belongs to the peptidase M28 family. Zn(2+) serves as cofactor.

It is found in the vacuole membrane. In terms of biological role, may be involved in vacuolar sorting and osmoregulation. The sequence is that of Vacuolar membrane protease from Pyrenophora tritici-repentis (strain Pt-1C-BFP) (Wheat tan spot fungus).